Reading from the N-terminus, the 795-residue chain is Forkhead box protein P4 (795 aa).

Polar residues predominate over residues 1 to 25 (MMVESASETIRSAPSGQNGVGSLSA). Residues 1–62 (MMVESASETI…SGGADSNGEM (62 aa)) form a disordered region. Low complexity predominate over residues 36 to 45 (AGTAPAAGRD). Residues S58 and S92 each carry the phosphoserine modification. A Glycyl lysine isopeptide (Lys-Gly) (interchain with G-Cter in SUMO2) cross-link involves residue K181. Disordered stretches follow at residues 233–252 (PQLWKGEGAPGQPAEDSGRQ) and 265–310 (TSFA…PLYG). The span at 292–303 (SRRDSSSHEETP) shows a compositional bias: basic and acidic residues. A C2H2-type zinc finger spans residues 312–337 (GECKWPGCETLCEDLGQFIKHLNTEH). The interval 354–375 (VQQLEIQLAKESERLQAMMAHL) is leucine-zipper. Residues 379 to 437 (PSEPKPFSQPVTVSADPFPDGLVHPPTSAAAPVTPLRPPGLGSASLHSGGPARRRSNDK) are disordered. K383 is covalently cross-linked (Glycyl lysine isopeptide (Lys-Gly) (interchain with G-Cter in SUMO2)). Positions 459–549 (RPPFTYASLI…PPKMTGSPTL (91 aa)) form a DNA-binding region, fork-head. Position 546 is a phosphoserine (S546). Residues 589–671 (ASSLLPLSQE…LEEDLGGEDM (83 aa)) are disordered. Polar residues predominate over residues 609-627 (SNGSSSPPRLSPPQYSHQI). A compositionally biased stretch (basic and acidic residues) spans 628–642 (QVKEEPAEAEEDRRP).

In terms of assembly, forms homodimers and heterodimers with FOXP1 and FOXP2. Dimerization is required for DNA-binding. As to expression, expressed in the adult heart, brain, spleen lung, liver, kidney and testes.

It is found in the nucleus. Its function is as follows. Transcriptional repressor that represses lung-specific expression. The sequence is that of Forkhead box protein P4 from Mus musculus (Mouse).